Reading from the N-terminus, the 67-residue chain is Probable Sec-independent protein translocase protein TatE (67 aa).

A helical transmembrane segment spans residues 4 to 21 (ISITKLLVVAALVVLLFG). The tract at residues 46-67 (EDAGAKKEAGGDIQAEKLSHKE) is disordered.

It belongs to the TatA/E family. TatE subfamily.

Its subcellular location is the cell inner membrane. Its function is as follows. Part of the twin-arginine translocation (Tat) system that transports large folded proteins containing a characteristic twin-arginine motif in their signal peptide across membranes. TatE shares overlapping functions with TatA. This is Probable Sec-independent protein translocase protein TatE from Citrobacter koseri (strain ATCC BAA-895 / CDC 4225-83 / SGSC4696).